A 269-amino-acid polypeptide reads, in one-letter code: 4-hydroxy-tetrahydrodipicolinate reductase (269 aa).

Residues 10–15 (GANGRM), E36, 99–101 (GTT), and 123–126 (AANF) each bind NAD(+). H156 functions as the Proton donor/acceptor in the catalytic mechanism. H157 lines the (S)-2,3,4,5-tetrahydrodipicolinate pocket. K160 functions as the Proton donor in the catalytic mechanism. 166–167 (GT) serves as a coordination point for (S)-2,3,4,5-tetrahydrodipicolinate.

It belongs to the DapB family.

Its subcellular location is the cytoplasm. The enzyme catalyses (S)-2,3,4,5-tetrahydrodipicolinate + NAD(+) + H2O = (2S,4S)-4-hydroxy-2,3,4,5-tetrahydrodipicolinate + NADH + H(+). The catalysed reaction is (S)-2,3,4,5-tetrahydrodipicolinate + NADP(+) + H2O = (2S,4S)-4-hydroxy-2,3,4,5-tetrahydrodipicolinate + NADPH + H(+). It participates in amino-acid biosynthesis; L-lysine biosynthesis via DAP pathway; (S)-tetrahydrodipicolinate from L-aspartate: step 4/4. Catalyzes the conversion of 4-hydroxy-tetrahydrodipicolinate (HTPA) to tetrahydrodipicolinate. The chain is 4-hydroxy-tetrahydrodipicolinate reductase from Neisseria meningitidis serogroup B (strain ATCC BAA-335 / MC58).